The sequence spans 353 residues: Tetraacyldisaccharide 4'-kinase (353 aa).

Residue 49–56 (TAGGTGKT) coordinates ATP.

Belongs to the LpxK family.

The enzyme catalyses a lipid A disaccharide + ATP = a lipid IVA + ADP + H(+). It participates in glycolipid biosynthesis; lipid IV(A) biosynthesis; lipid IV(A) from (3R)-3-hydroxytetradecanoyl-[acyl-carrier-protein] and UDP-N-acetyl-alpha-D-glucosamine: step 6/6. Functionally, transfers the gamma-phosphate of ATP to the 4'-position of a tetraacyldisaccharide 1-phosphate intermediate (termed DS-1-P) to form tetraacyldisaccharide 1,4'-bis-phosphate (lipid IVA). The sequence is that of Tetraacyldisaccharide 4'-kinase from Chlorobium phaeovibrioides (strain DSM 265 / 1930) (Prosthecochloris vibrioformis (strain DSM 265)).